A 219-amino-acid polypeptide reads, in one-letter code: Cytidylate kinase (219 aa).

21-29 lines the ATP pocket; sequence GPAASGKGT.

Belongs to the cytidylate kinase family. Type 1 subfamily.

It is found in the cytoplasm. It catalyses the reaction CMP + ATP = CDP + ADP. The enzyme catalyses dCMP + ATP = dCDP + ADP. In Rickettsia africae (strain ESF-5), this protein is Cytidylate kinase.